We begin with the raw amino-acid sequence, 1112 residues long: Rho GTPase-activating protein 7 (1112 aa).

One can recognise an SAM domain in the interval 37–104 (LAEIEAKEAC…LNKCAVMKLE (68 aa)). Serine 112, serine 115, and serine 155 each carry phosphoserine. Disordered regions lie at residues 146-203 (SPKQ…APAR), 318-350 (RSISSSTQTSSSSSQSETSSNVSTPSPVTRTRS), 405-459 (PKAL…VSSR), and 512-574 (SDEG…GVGA). A compositionally biased stretch (polar residues) spans 183–193 (VHSTGSLTTHA). Positions 296–468 (QLNCVEISAL…RLSIYDNVPG (173 aa)) are focal adhesion-targeting (FAT). Composition is skewed to low complexity over residues 320 to 348 (ISSSTQTSSSSSQSETSSNVSTPSPVTRT) and 409 to 423 (SNGSFSPSGNNSSVN). Serine 343 is modified (phosphoserine). Basic and acidic residues predominate over residues 437 to 446 (LRRENSSPKE). Polar residues predominate over residues 520-532 (ALDSVSPCPSSPK). Positions 534 to 544 (IHLDVDNDRAT) are enriched in basic and acidic residues. Polar residues predominate over residues 547–556 (DLDSTGNSLN). A polybasic cluster (PBR) region spans residues 635–657 (KHGFSWAVPKFMKRIKVPDYKDR). In terms of domain architecture, Rho-GAP spans 662 to 868 (VPLTVNVQRT…HMIAECKKLF (207 aa)). The region spanning 898-1105 (CNDDSADYQH…RDSFSHQNTE (208 aa)) is the START domain.

In terms of assembly, interacts with EF1A1, facilitates EF1A1 distribution to the membrane periphery and ruffles upon growth factor stimulation and suppresses cell migration. Interacts with tensin TNS1 (via N-terminus); the interaction is decreased by phosphorylation of TNS1. Interacts with TNS3 and PTEN; in resting cells, interacts with TNS3 (via C2 tensin-type domain) but, following growth factor stimulation, TNS3 and PTEN are phosphorylated which leads to weakened interaction with TNS3 and enhanced interaction with PTEN. Interacts (via C-terminus) with tensin TNS4 (via SH2 domain); the interaction is independent of tyrosine phosphorylation of DLC1.

It localises to the cytoplasm. It is found in the cell junction. The protein resides in the focal adhesion. Its subcellular location is the membrane. Functions as a GTPase-activating protein for the small GTPases RHOA, RHOB, RHOC and CDC42, terminating their downstream signaling. This induces morphological changes and detachment through cytoskeletal reorganization, playing a critical role in biological processes such as cell migration and proliferation. Also functions in vivo as an activator of the phospholipase PLCD1. Active DLC1 increases cell migration velocity but reduces directionality. Required for growth factor-induced epithelial cell migration; in resting cells, interacts with TNS3 while PTEN interacts with the p85 regulatory subunit of the PI3K kinase complex but growth factor stimulation induces phosphorylation of TNS3 and PTEN, causing them to change their binding preference so that PTEN interacts with DLC1 and TNS3 interacts with p85. The PTEN-DLC1 complex translocates to the posterior of migrating cells to activate RHOA while the TNS3-p85 complex translocates to the leading edge of migrating cells to promote RAC1 activation. The chain is Rho GTPase-activating protein 7 (DLC1) from Bos taurus (Bovine).